Reading from the N-terminus, the 79-residue chain is MGSLSIWHWIVVIAVILLLFGRGKISDLMGDVAQGIKAFKKGMQDDEKTAEKPEPVKTIDHNAPAPGASRSDVGSKTTV.

Residues 1-21 (MGSLSIWHWIVVIAVILLLFG) traverse the membrane as a helical segment. Residues 43–60 (MQDDEKTAEKPEPVKTID) show a composition bias toward basic and acidic residues. Residues 43–79 (MQDDEKTAEKPEPVKTIDHNAPAPGASRSDVGSKTTV) are disordered.

This sequence belongs to the TatA/E family. As to quaternary structure, the Tat system comprises two distinct complexes: a TatABC complex, containing multiple copies of TatA, TatB and TatC subunits, and a separate TatA complex, containing only TatA subunits. Substrates initially bind to the TatABC complex, which probably triggers association of the separate TatA complex to form the active translocon.

The protein localises to the cell inner membrane. Functionally, part of the twin-arginine translocation (Tat) system that transports large folded proteins containing a characteristic twin-arginine motif in their signal peptide across membranes. TatA could form the protein-conducting channel of the Tat system. This is Sec-independent protein translocase protein TatA from Nitrobacter hamburgensis (strain DSM 10229 / NCIMB 13809 / X14).